A 333-amino-acid chain; its full sequence is DNA-directed RNA polymerase subunit alpha (333 aa).

Positions 1-227 are alpha N-terminal domain (alpha-NTD); that stretch reads MRKIKVAPFM…VMNKQLSVFN (227 aa). An alpha C-terminal domain (alpha-CTD) region spans residues 247-333; sequence ELKPFLAAVD…LVKKLEQLKA (87 aa).

Belongs to the RNA polymerase alpha chain family. In terms of assembly, homodimer. The RNAP catalytic core consists of 2 alpha, 1 beta, 1 beta' and 1 omega subunit. When a sigma factor is associated with the core the holoenzyme is formed, which can initiate transcription.

It carries out the reaction RNA(n) + a ribonucleoside 5'-triphosphate = RNA(n+1) + diphosphate. DNA-dependent RNA polymerase catalyzes the transcription of DNA into RNA using the four ribonucleoside triphosphates as substrates. The chain is DNA-directed RNA polymerase subunit alpha from Sulfurovum sp. (strain NBC37-1).